A 414-amino-acid chain; its full sequence is Ena/VASP-like protein (414 aa).

The WH1 domain maps to 1 to 112 (MSEQSICQAR…NAMLFALNIM (112 aa)). Residue Ser130 is modified to Phosphoserine. The disordered stretch occupies residues 157 to 369 (ATGPILPPGH…SRVKPAGSVN (213 aa)). A compositionally biased stretch (pro residues) spans 179-204 (GPPPPPPPPVPPPPTGSTPPPPPPLP). A compositionally biased stretch (low complexity) spans 217 to 228 (SASGLAAALAGA). The interval 220 to 240 (GLAAALAGAKLRRVQRPEDAS) is EVH2 block A. The EVH2 stretch occupies residues 220–411 (GLAAALAGAK…DAIRQELSGI (192 aa)). Positions 229 to 232 (KLRR) match the KLKR motif. Positions 240 to 251 (SGGSSPSGTSKS) are enriched in low complexity. Ser244 and Ser257 each carry phosphoserine. Positions 263–280 (GGLMEEMNKLLAKRRKAA) are EVH2 block B. Positions 297–318 (EDPSTSPSPGTRATSQPPNSSE) are enriched in polar residues. 8 positions are modified to phosphoserine: Ser302, Ser304, Ser327, Ser329, Ser339, Ser347, Ser352, and Ser367. Residues 319-329 (AGRKPWERSNS) show a composition bias toward basic and acidic residues. The segment at 340-360 (RTPSVAKSPEAKSPLQSQPHS) is required for interaction with ZDHHC17. Positions 377–411 (DLDRMKQEILEEVVRELHKVKEEIIDAIRQELSGI) are EVH2 block C.

The protein belongs to the Ena/VASP family. As to quaternary structure, homotetramer. Binds to the SH3 domains of ABL1, LYN and SRC. Also binds to profilin, with preference for isoform IIa of PFN2, and the WW domain of APBB1/FE65. Binds to SEMA6A. Interacts, via the Pro-rich region, with the C-terminal SH3 domain of DNMBP. Interacts with RAPH1. Binds, via the EVH1 domain, the Pro-rich domain of Listeria monocytogenes actA. Binds, via the EVH1 domain, the Pro-rich domain of ZYX. Interacts with FYB1. Interacts with ZDHHC17. Post-translationally, phosphorylated by PKA; phosphorylation abolishes binding to SH3 domains of ABL and SRC. In terms of tissue distribution, highest expression in thymus and spleen (at protein level). Low levels in placenta, ovary, testis, fat and lung (at protein level). Isoform 1 and isoform 2 are expressed in cortical neurons and glial cells.

Its subcellular location is the cytoplasm. The protein resides in the cytoskeleton. It is found in the stress fiber. The protein localises to the cell projection. It localises to the lamellipodium. Its function is as follows. Ena/VASP proteins are actin-associated proteins involved in a range of processes dependent on cytoskeleton remodeling and cell polarity such as axon guidance and lamellipodial and filopodial dynamics in migrating cells. EVL enhances actin nucleation and polymerization. In Mus musculus (Mouse), this protein is Ena/VASP-like protein (Evl).